Here is a 449-residue protein sequence, read N- to C-terminus: Probable multidrug resistance protein NorM (449 aa).

The next 12 membrane-spanning stretches (helical) occupy residues 17-39 (LMWP…TIMA), 54-76 (VGLW…PLVA), 97-119 (VAVS…LPIL), 129-151 (AGLF…ALRG), 164-186 (VISL…GIGP), 196-215 (GFAT…SYIY), 243-265 (LGLP…AIVL), 280-302 (MSVT…IRVG), 315-337 (LVQK…LIWF), 352-369 (VFDI…YQLM), 390-412 (MWIT…ARVA), and 417-439 (AGVW…MRLY).

The protein belongs to the multi antimicrobial extrusion (MATE) (TC 2.A.66.1) family.

It is found in the cell inner membrane. In terms of biological role, multidrug efflux pump. The polypeptide is Probable multidrug resistance protein NorM (norM) (Acinetobacter baylyi (strain ATCC 33305 / BD413 / ADP1)).